Here is a 272-residue protein sequence, read N- to C-terminus: Carbonic anhydrase (272 aa).

3 residues coordinate Zn(2+): cysteine 39, histidine 98, and cysteine 101.

The protein belongs to the beta-class carbonic anhydrase family. In terms of assembly, a hexamer formed by a trimer of dimers. Purified from carboxysomes with the both RuBisCO subunits and the full-length form of CcmM, probably interacts with the N-terminus of CcmM. Zn(2+) is required as a cofactor.

It is found in the carboxysome. The catalysed reaction is hydrogencarbonate + H(+) = CO2 + H2O. Functionally, reversible hydration of carbon dioxide. Essential to photosynthetic carbon dioxide fixation, supplies CO(2) to RuBisCO (ribulose bisphosphate carboxylase, rbcL-rbcS) in the carboxysome. Loss of activity results in limitation of CO(2) availability to RuBisCO located in the cytoplasm. The chain is Carbonic anhydrase from Synechococcus elongatus (strain ATCC 33912 / PCC 7942 / FACHB-805) (Anacystis nidulans R2).